The chain runs to 295 residues: 4-hydroxy-tetrahydrodipicolinate synthase (295 aa).

Thr45 contributes to the pyruvate binding site. Tyr131 functions as the Proton donor/acceptor in the catalytic mechanism. Residue Lys159 is the Schiff-base intermediate with substrate of the active site. Val202 is a pyruvate binding site.

Belongs to the DapA family. As to quaternary structure, homotetramer; dimer of dimers.

The protein localises to the cytoplasm. The catalysed reaction is L-aspartate 4-semialdehyde + pyruvate = (2S,4S)-4-hydroxy-2,3,4,5-tetrahydrodipicolinate + H2O + H(+). The protein operates within amino-acid biosynthesis; L-lysine biosynthesis via DAP pathway; (S)-tetrahydrodipicolinate from L-aspartate: step 3/4. Functionally, catalyzes the condensation of (S)-aspartate-beta-semialdehyde [(S)-ASA] and pyruvate to 4-hydroxy-tetrahydrodipicolinate (HTPA). In Methanothrix thermoacetophila (strain DSM 6194 / JCM 14653 / NBRC 101360 / PT) (Methanosaeta thermophila), this protein is 4-hydroxy-tetrahydrodipicolinate synthase.